Consider the following 218-residue polypeptide: Ribose-5-phosphate isomerase A (218 aa).

Substrate contacts are provided by residues 28-31 (TGST), 81-84 (DGAD), and 94-97 (KGGG). Residue Glu103 is the Proton acceptor of the active site. Lys121 is a binding site for substrate.

It belongs to the ribose 5-phosphate isomerase family. Homodimer.

The enzyme catalyses aldehydo-D-ribose 5-phosphate = D-ribulose 5-phosphate. The protein operates within carbohydrate degradation; pentose phosphate pathway; D-ribose 5-phosphate from D-ribulose 5-phosphate (non-oxidative stage): step 1/1. Catalyzes the reversible conversion of ribose-5-phosphate to ribulose 5-phosphate. The chain is Ribose-5-phosphate isomerase A from Shewanella sediminis (strain HAW-EB3).